Reading from the N-terminus, the 81-residue chain is Putative defensin-like protein 56 (81 aa).

An N-terminal signal peptide occupies residues 1-23 (MNITKAYVIFFLVVILTNSLSNS). 4 cysteine pairs are disulfide-bonded: Cys-46-Cys-80, Cys-50-Cys-73, Cys-59-Cys-78, and Cys-63-Cys-79.

Belongs to the DEFL family.

The protein localises to the secreted. This is Putative defensin-like protein 56 from Arabidopsis thaliana (Mouse-ear cress).